Consider the following 675-residue polypeptide: Envelope glycoprotein (675 aa).

Positions 1–34 (MACSTLPKSPKDKIDPRDLLIPLILFLSLKGARS) are cleaved as a signal peptide. Residues 35–270 (AAPGSSPHQV…RYQNLGPRVP (236 aa)) form a receptor-binding domain (RBD) region. At 35-620 (AAPGSSPHQV…FNRSPWFTTL (586 aa)) the chain is on the extracellular side. Asn46 carries an N-linked (GlcNAc...) asparagine; by host glycan. Disulfide bonds link Cys80/Cys132, Cys106/Cys121, Cys107/Cys117, Cys155/Cys175, and Cys167/Cys180. His89 provides a ligand contact to Zn(2+). Residue Asp120 participates in Zn(2+) binding. N-linked (GlcNAc...) asparagine; by host glycosylation is present at Asn202. The cysteines at positions 212 and 218 are disulfide-linked. The segment at 276–323 (VLADQLSLPRPNPLPKPAKSPPASNSTPTLISPSPTPTQPPPAGTGDR) is disordered. The segment covering 285-295 (RPNPLPKPAKS) has biased composition (pro residues). The segment covering 296–308 (PPASNSTPTLISP) has biased composition (low complexity). The span at 309-318 (SPTPTQPPPA) shows a compositional bias: pro residues. Residue Asn336 is glycosylated (N-linked (GlcNAc...) asparagine; by host). Disulfide bonds link Cys346–Cys349, Cys346–Cys573, Cys376–Cys430, Cys395–Cys407, Cys437–Cys450, and Cys565–Cys572. The CXXC motif lies at 346–349 (CWLC). N-linked (GlcNAc...) asparagine; by host glycosylation is found at Asn368 and Asn375. N-linked (GlcNAc...) asparagine; by host glycosylation is found at Asn408 and Asn444. Residues 482 to 502 (VSLTLALLLGGLTMGGIAAGV) form a fusion peptide region. Residues 513-547 (QQFQQLHAAVQDDLKEVEKSITNLEKSLTSLSEVV) adopt a coiled-coil conformation. An immunosuppression region spans residues 548 to 564 (LQNRRGLDLLFLKEGGL). Residues 565–573 (CAALKEECC) carry the CX6CC motif. Residues 621 to 641 (ISTIMGPLIILLLILLFGPCI) traverse the membrane as a helical segment. Cys640 carries S-palmitoyl cysteine; by host lipidation. At 642–675 (LNRLVQFVKDRISVVQALVLTQQYHQLKPLEYEP) the chain is on the cytoplasmic side. The short motif at 665–668 (YHQL) is the YXXL motif; contains endocytosis signal element.

In terms of assembly, the mature envelope protein (Env) consists of a trimer of SU-TM heterodimers attached by a labile interchain disulfide bond. Post-translationally, specific enzymatic cleavages in vivo yield mature proteins. Envelope glycoproteins are synthesized as an inactive precursor that is N-glycosylated and processed likely by host cell furin or by a furin-like protease in the Golgi to yield the mature SU and TM proteins. The cleavage site between SU and TM requires the minimal sequence [KR]-X-[KR]-R. The R-peptide is released from the C-terminus of the cytoplasmic tail of the TM protein upon particle formation as a result of proteolytic cleavage by the viral protease. Cleavage of this peptide is required for TM to become fusogenic. The CXXC motif is highly conserved across a broad range of retroviral envelope proteins. It is thought to participate in the formation of a labile disulfide bond possibly with the CX6CC motif present in the transmembrane protein. Isomerization of the intersubunit disulfide bond to an SU intrachain disulfide bond is thought to occur upon receptor recognition in order to allow membrane fusion. In terms of processing, the transmembrane protein is palmitoylated. Post-translationally, the R-peptide is palmitoylated.

The protein resides in the virion membrane. The protein localises to the host cell membrane. In terms of biological role, the surface protein (SU) attaches the virus to the host cell by binding to its receptor. This interaction triggers the refolding of the transmembrane protein (TM) and is thought to activate its fusogenic potential by unmasking its fusion peptide. Fusion occurs at the host cell plasma membrane. Functionally, the transmembrane protein (TM) acts as a class I viral fusion protein. Under the current model, the protein has at least 3 conformational states: pre-fusion native state, pre-hairpin intermediate state, and post-fusion hairpin state. During viral and target cell membrane fusion, the coiled coil regions (heptad repeats) assume a trimer-of-hairpins structure, positioning the fusion peptide in close proximity to the C-terminal region of the ectodomain. The formation of this structure appears to drive apposition and subsequent fusion of viral and target cell membranes. Membranes fusion leads to delivery of the nucleocapsid into the cytoplasm. The chain is Envelope glycoprotein (env) from Mus musculus (Mouse).